The chain runs to 339 residues: 5-dehydro-2-deoxygluconokinase (339 aa).

Belongs to the carbohydrate kinase PfkB family.

The catalysed reaction is 5-dehydro-2-deoxy-D-gluconate + ATP = 6-phospho-5-dehydro-2-deoxy-D-gluconate + ADP + H(+). Its pathway is polyol metabolism; myo-inositol degradation into acetyl-CoA; acetyl-CoA from myo-inositol: step 5/7. Its function is as follows. Catalyzes the phosphorylation of 5-dehydro-2-deoxy-D-gluconate (2-deoxy-5-keto-D-gluconate or DKG) to 6-phospho-5-dehydro-2-deoxy-D-gluconate (DKGP). In Clostridium tetani (strain Massachusetts / E88), this protein is 5-dehydro-2-deoxygluconokinase.